The sequence spans 123 residues: Small ribosomal subunit protein uS12c (123 aa).

Belongs to the universal ribosomal protein uS12 family. As to quaternary structure, part of the 30S ribosomal subunit.

The protein localises to the plastid. The protein resides in the chloroplast. Functionally, with S4 and S5 plays an important role in translational accuracy. Located at the interface of the 30S and 50S subunits. This is Small ribosomal subunit protein uS12c (rps12) from Marchantia polymorpha (Common liverwort).